Reading from the N-terminus, the 318-residue chain is Olfactory receptor 2T3 (318 aa).

The Extracellular portion of the chain corresponds to 1–30 (MCSGNQTSQNQTASTDFTLTGLFAESKHAA). Residues Asn5 and Asn10 are each glycosylated (N-linked (GlcNAc...) asparagine). The helical transmembrane segment at 31 to 54 (LLYTVTFLLFLMALTGNALLILLI) threads the bilayer. The Cytoplasmic segment spans residues 55-62 (HSEPRLHT). A helical membrane pass occupies residues 63 to 84 (PMYFFISQLALMDLMYLCVTVP). Topologically, residues 85–105 (KMLVGQVTGDDTISPSGCGIQ) are extracellular. Residues Cys102 and Cys194 are joined by a disulfide bond. Residues 106–125 (MFFYLTLAGAEVFLLAAMAY) form a helical membrane-spanning segment. At 126–144 (DRYAAVCRPLHYPLLMNQR) the chain is on the cytoplasmic side. Residues 145 to 163 (VCQLLVSACWVLGMVDGLL) traverse the membrane as a helical segment. Residues 164–200 (LTPITMSFPFCQSRKILSFFCETPALLKLSCSDVSLY) lie on the Extracellular side of the membrane. A helical transmembrane segment spans residues 201 to 224 (KTLMYLCCILMLLAPIMVISSSYT). The Cytoplasmic portion of the chain corresponds to 225–241 (LILHLIHRMNSAAGHRK). The helical transmembrane segment at 242–264 (ALATCSSHMIIVLLLFGASFYTY) threads the bilayer. Residues 265 to 277 (MLPSSYHTAEQDM) lie on the Extracellular side of the membrane. Residues 278–297 (MVSAFYTIFTPVLNPLIYSL) traverse the membrane as a helical segment. At 298–318 (RNKDVTRALRSMMQSRMNQEK) the chain is on the cytoplasmic side.

Belongs to the G-protein coupled receptor 1 family.

It localises to the cell membrane. Functionally, odorant receptor. This chain is Olfactory receptor 2T3 (OR2T3), found in Homo sapiens (Human).